The sequence spans 84 residues: RNA-binding protein Hfq (84 aa).

Residues 9-68 (DPYLNTLRKERVPVSIYLVNGIKLQGQIESFDQFVILLKNTVSQMVYKHAISTVVPGRPV) enclose the Sm domain.

The protein belongs to the Hfq family. Homohexamer.

RNA chaperone that binds small regulatory RNA (sRNAs) and mRNAs to facilitate mRNA translational regulation in response to envelope stress, environmental stress and changes in metabolite concentrations. Also binds with high specificity to tRNAs. This Stutzerimonas stutzeri (strain A1501) (Pseudomonas stutzeri) protein is RNA-binding protein Hfq.